The primary structure comprises 184 residues: Phosphonoformate cytidylyltransferase (184 aa).

The catalysed reaction is phosphonoformate + CTP = CMP-5'-phosphonoformate + diphosphate. It participates in secondary metabolite biosynthesis; bialaphos biosynthesis. Functionally, catalyzes the displacement of the beta- and gamma-phosphates of CTP by phosphonoformate to produce CMP-5'-phosphonoformate, an intermediate in the biosynthesis of phosphinothricin tripeptide (PTT), also known as bialaphos (BA), a natural-product antibiotic and potent herbicide. This chain is Phosphonoformate cytidylyltransferase, found in Streptomyces viridochromogenes (strain DSM 40736 / JCM 4977 / BCRC 1201 / Tue 494).